The following is a 328-amino-acid chain: Acetaldehyde dehydrogenase 3 (328 aa).

Residue 17–20 (SGNI) coordinates NAD(+). Residue cysteine 135 is the Acyl-thioester intermediate of the active site. Residues 166–174 (SAGPGTRAN) and asparagine 298 each bind NAD(+).

It belongs to the acetaldehyde dehydrogenase family.

It carries out the reaction acetaldehyde + NAD(+) + CoA = acetyl-CoA + NADH + H(+). In Nocardia farcinica (strain IFM 10152), this protein is Acetaldehyde dehydrogenase 3.